A 290-amino-acid polypeptide reads, in one-letter code: Probable adenylate kinase 2, chloroplastic (290 aa).

Over residues 1–10 (MASSMAATAT) the composition is skewed to low complexity. Residues 1–37 (MASSMAATATLSPPVLSAERPTVRGGLFLPPSPATSR) are disordered. A chloroplast-targeting transit peptide spans 1–61 (MASSMAATAT…ATRKPRSLPR (61 aa)). Residue 83 to 88 (ASGKGT) coordinates ATP. The interval 103–132 (SAGDLLRAEIAAGSENGKRAKEFMEKGQLV) is NMP. AMP is bound by residues Arg-109, 130 to 132 (QLV), 159 to 162 (GYPR), and Gln-166. ATP is bound by residues Arg-193, Arg-197, and 206 to 207 (IY). The tract at residues 196–229 (GRRLDPVTGKIYHLKYSPPENEEIASRLTQRFDD) is LID. AMP is bound by residues Arg-226 and Arg-237.

Belongs to the adenylate kinase family.

The protein resides in the plastid. It is found in the chloroplast. The catalysed reaction is AMP + ATP = 2 ADP. Catalyzes the reversible transfer of the terminal phosphate group between ATP and AMP. Plays an important role in cellular energy homeostasis and in adenine nucleotide metabolism. The polypeptide is Probable adenylate kinase 2, chloroplastic (Oryza sativa subsp. japonica (Rice)).